A 160-amino-acid polypeptide reads, in one-letter code: MTPDDIAALPYRKCVGVVLWDGAGRVFTGQRYDSELPAWQMPQGGIEDGEDARTAALRELVEETGVAVEKVEVLAETPDWIKYDLPPEIVPRIWKGRYKGQAQRWVLMKFLGSDADINIETKHPEFSEWRWLEPASVLDSIVPFKRDVYEQVFDAFSDWL.

A Nudix hydrolase domain is found at 10–154 (PYRKCVGVVL…KRDVYEQVFD (145 aa)). Residues 44 to 65 (GGIEDGEDARTAALRELVEETG) carry the Nudix box motif.

The protein belongs to the Nudix hydrolase family. RppH subfamily. The cofactor is a divalent metal cation.

Accelerates the degradation of transcripts by removing pyrophosphate from the 5'-end of triphosphorylated RNA, leading to a more labile monophosphorylated state that can stimulate subsequent ribonuclease cleavage. The polypeptide is RNA pyrophosphohydrolase (Dinoroseobacter shibae (strain DSM 16493 / NCIMB 14021 / DFL 12)).